The primary structure comprises 393 residues: Succinate--CoA ligase [ADP-forming] subunit beta (393 aa).

Residues 9–251 enclose the ATP-grasp domain; sequence KALFEKFGVL…LNEEDPKEIE (243 aa). ATP-binding positions include lysine 46, 53 to 55, serine 109, and glutamate 114; that span reads GRG. The Mg(2+) site is built by asparagine 206 and aspartate 220. Substrate contacts are provided by residues asparagine 271 and 328 to 330; that span reads GIM.

It belongs to the succinate/malate CoA ligase beta subunit family. As to quaternary structure, heterotetramer of two alpha and two beta subunits. Requires Mg(2+) as cofactor.

The enzyme catalyses succinate + ATP + CoA = succinyl-CoA + ADP + phosphate. The catalysed reaction is GTP + succinate + CoA = succinyl-CoA + GDP + phosphate. It participates in carbohydrate metabolism; tricarboxylic acid cycle; succinate from succinyl-CoA (ligase route): step 1/1. In terms of biological role, succinyl-CoA synthetase functions in the citric acid cycle (TCA), coupling the hydrolysis of succinyl-CoA to the synthesis of either ATP or GTP and thus represents the only step of substrate-level phosphorylation in the TCA. The beta subunit provides nucleotide specificity of the enzyme and binds the substrate succinate, while the binding sites for coenzyme A and phosphate are found in the alpha subunit. The chain is Succinate--CoA ligase [ADP-forming] subunit beta from Opitutus terrae (strain DSM 11246 / JCM 15787 / PB90-1).